The chain runs to 223 residues: MKTIQIAIDGPASSGKSTVAKIIAKDFGFTYLDTGAMYRAATYMALKNQLGVEEVEALLALLDQHPISFGRSETGDQLVFVGDVDITHPIRENEVTNHVSAIAAIPEVREKLVSLQQEIAQQGGIVMDGRDIGTVVLPQAELKIFLVASVDERAERRYKENIAKGIETDLETLKKEIAARDYKDSHRETSPLKQAEDAVYLDTTGLNIQEVVEKIKAEAEKRM.

10 to 18 (GPASSGKST) provides a ligand contact to ATP.

The protein belongs to the cytidylate kinase family. Type 1 subfamily.

It is found in the cytoplasm. The enzyme catalyses CMP + ATP = CDP + ADP. The catalysed reaction is dCMP + ATP = dCDP + ADP. In Streptococcus pneumoniae (strain Hungary19A-6), this protein is Cytidylate kinase.